The primary structure comprises 115 residues: Large ribosomal subunit protein bL19 (115 aa).

It belongs to the bacterial ribosomal protein bL19 family.

This protein is located at the 30S-50S ribosomal subunit interface and may play a role in the structure and function of the aminoacyl-tRNA binding site. The sequence is that of Large ribosomal subunit protein bL19 from Lawsonia intracellularis (strain PHE/MN1-00).